The following is a 400-amino-acid chain: Nicotinate phosphoribosyltransferase (400 aa).

His-220 is modified (phosphohistidine; by autocatalysis).

Belongs to the NAPRTase family. Transiently phosphorylated on a His residue during the reaction cycle. Phosphorylation strongly increases the affinity for substrates and increases the rate of nicotinate D-ribonucleotide production. Dephosphorylation regenerates the low-affinity form of the enzyme, leading to product release.

The catalysed reaction is nicotinate + 5-phospho-alpha-D-ribose 1-diphosphate + ATP + H2O = nicotinate beta-D-ribonucleotide + ADP + phosphate + diphosphate. Its pathway is cofactor biosynthesis; NAD(+) biosynthesis; nicotinate D-ribonucleotide from nicotinate: step 1/1. Functionally, catalyzes the synthesis of beta-nicotinate D-ribonucleotide from nicotinate and 5-phospho-D-ribose 1-phosphate at the expense of ATP. The polypeptide is Nicotinate phosphoribosyltransferase (Enterobacter sp. (strain 638)).